We begin with the raw amino-acid sequence, 626 residues long: MLKQFLLLQSFSFFLFNVVIVGGRTFGGGFSAEENPFTPKASLVRYWNKEIRGQSPRSEFLISKASPLNAVDSATFSKLAAANSLPTRFPDFCSAANLFCFPDLGASLEKHDDDVKFSVYDQKNFTNYGNARAGGADSFKNYSKDGNVVTDSFRRYSRNAAGHDDKFTVYGENSNVVEEGFNSYGTFGTGGAGDFTNYQNNVNNPTSRFTAYSDGGNGRSQTFKTYTHEANAGNGQSFTSYGKNGNGVPNEFTSYGVSSNVIGSGFSNYGESGNAANDTFTSYGSDGNVPQNNFNNYGASGNAAVDTFANYRDKANVGDDSFSSYAKDSNSEKVNFVNYGQSFNPGSETFTGYGKGAEGSKLSFKTYTPNSTFKDYAKKGVAFAKYNVSTTTANTVGDGKTVNKWIEPGKFFRESSLKEGTVIPMPDIKDKMPKRSFLPRSIITKLPFSTSKLGEIKRIFHAVENSTMGGIITDAVTECERPPSVGETKRCVGSAEDMIDFATSVLGRSVVLRTTENVAGSKEKVVIGKVNGINGGKLTKAVSCHQSLYPYLLYYCHSVPKVRVYEADLLELNSKKKINHGIAICHMDTSSWGPSHGAFLALGSKPGRIEVCHWIFENDMNWAIAD.

Residues 1–23 (MLKQFLLLQSFSFFLFNVVIVGG) form the signal peptide. An FXXY 1 repeat occupies 117-120 (FSVY). Asn-124 carries an N-linked (GlcNAc...) asparagine glycan. 11 FXXY repeats span residues 125-128 (FTNY), 139-142 (FKNY), 153-156 (FRRY), 167-170 (FTVY), 181-184 (FNSY), 195-198 (FTNY), 209-212 (FTAY), 223-226 (FKTY), 238-241 (FTSY), 252-255 (FTSY), and 266-269 (FSNY). Asn-141 carries an N-linked (GlcNAc...) asparagine glycan. The N-linked (GlcNAc...) asparagine glycan is linked to Asn-277. 7 FXXY repeats span residues 280–283 (FTSY), 294–297 (FNNY), 308–311 (FANY), 322–325 (FSSY), 336–339 (FVNY), 350–353 (FTGY), and 364–367 (FKTY). The N-linked (GlcNAc...) asparagine glycan is linked to Asn-370. FXXY repeat units lie at residues 373–376 (FKDY) and 383–386 (FAKY). N-linked (GlcNAc...) asparagine glycosylation is found at Asn-387 and Asn-465. The BURP domain maps to 411-625 (FFRESSLKEG…FENDMNWAIA (215 aa)).

As to expression, expressed in flowers and stems. Detected in trichomes, guard cells, root vascular tissue, root hairs, pollen sacs, sepals and styles of pistils.

It is found in the secreted. The protein localises to the extracellular space. The protein resides in the apoplast. Its subcellular location is the cell wall. Involved in cell size determination. May serve as a chaperone for expansins through the secretory pathway. This is Polygalacturonase 1 beta-like protein 3 from Arabidopsis thaliana (Mouse-ear cress).